Here is a 348-residue protein sequence, read N- to C-terminus: Selenide, water dikinase (348 aa).

The active site involves Cys17. ATP contacts are provided by residues Lys20 and 48-50; that span reads TRD. Asp51 contacts Mg(2+). Residues Asp68, Asp91, and 139–141 each bind ATP; that span reads GHS. Asp91 lines the Mg(2+) pocket. Asp227 lines the Mg(2+) pocket.

This sequence belongs to the selenophosphate synthase 1 family. Class I subfamily. In terms of assembly, homodimer. Mg(2+) serves as cofactor.

It carries out the reaction hydrogenselenide + ATP + H2O = selenophosphate + AMP + phosphate + 2 H(+). In terms of biological role, synthesizes selenophosphate from selenide and ATP. The sequence is that of Selenide, water dikinase from Yersinia pseudotuberculosis serotype I (strain IP32953).